A 263-amino-acid chain; its full sequence is Killer cell lectin-like receptor 4 (263 aa).

The Cytoplasmic portion of the chain corresponds to 1–44; the sequence is MTEQEDTFSAVRFHKSSGLQNEMRLKETRKPEKARLRVCSVPWQ. Residues 45–65 traverse the membrane as a helical; Signal-anchor for type II membrane protein segment; that stretch reads LIVIALGILISLRLVTVAVLM. Over 66–263 the chain is Extracellular; it reads TNIFQYGQQK…CGKRLDKFPH (198 aa). Asn87 and Asn104 each carry an N-linked (GlcNAc...) asparagine glycan. The C-type lectin domain occupies 139 to 258; the sequence is GVKVYWFCYG…SFICICGKRL (120 aa). 4 cysteine pairs are disulfide-bonded: Cys146–Cys151, Cys164–Cys252, Cys168–Cys254, and Cys233–Cys246. 2 N-linked (GlcNAc...) asparagine glycosylation sites follow: Asn170 and Asn222.

In terms of assembly, homodimer; disulfide-linked. Interacts with the adapter protein TYROBP/DAP12; the interaction leads to natural killer cell activation.

It is found in the cell membrane. In terms of biological role, receptor on natural killer (NK) cells for class I MHC. The protein is Killer cell lectin-like receptor 4 (Klra4) of Mus musculus (Mouse).